Here is an 87-residue protein sequence, read N- to C-terminus: MAIFKSISSISNSTVSIGSTIGASNQTGSNINDNSIACFDGGLRGNGGFNGGWGGIGGFNGGCGGSNANIINLDIDIGRRHHRRHCC.

The protein belongs to the UPF0512 family.

This chain is UPF0512 protein B, found in Dictyostelium discoideum (Social amoeba).